Here is a 330-residue protein sequence, read N- to C-terminus: Ig gamma-2A chain C region, A allele (330 aa).

3 Ig-like domains span residues 6–98, 121–220, and 229–325; these read PSVY…KKIE, PSVF…RTIS, and PQVY…KSFS. Cystine bridges form between Cys-27–Cys-82, Cys-144–Cys-204, and Cys-250–Cys-308. Asn-180 is a glycosylation site (N-linked (GlcNAc...) asparagine).

This is Ig gamma-2A chain C region, A allele (Ighg) from Mus musculus (Mouse).